Reading from the N-terminus, the 291-residue chain is rRNA 2'-O-methyltransferase fibrillarin (291 aa).

2 stretches are compositionally biased toward basic and acidic residues: residues 1–12 and 20–29; these read MKKTNKRPDGRK and FRSDKGEGRG. Residues 1–45 form a disordered region; the sequence is MKKTNKRPDGRKFQKGGKPFRSDKGEGRGRMNNKKKGSVNAGLDR. Asymmetric dimethylarginine is present on residues R28 and R62. S-adenosyl-L-methionine-binding positions include 134–135, 153–154, 178–179, and 198–201; these read TT, EF, DA, and DVSQ.

It belongs to the methyltransferase superfamily. Fibrillarin family. Component of box C/D small nucleolar ribonucleoprotein (snoRNP) particles.

It localises to the nucleus. It is found in the nucleolus. The catalysed reaction is L-glutaminyl-[histone H2A] + S-adenosyl-L-methionine = N(5)-methyl-L-glutaminyl-[histone H2A] + S-adenosyl-L-homocysteine + H(+). Its function is as follows. S-adenosyl-L-methionine-dependent methyltransferase that has the ability to methylate both RNAs and proteins. Involved in pre-rRNA processing. Utilizes the methyl donor S-adenosyl-L-methionine to catalyze the site-specific 2'-hydroxyl methylation of ribose moieties in pre-ribosomal RNA. Site specificity is provided by a guide RNA that base pairs with the substrate. Methylation occurs at a characteristic distance from the sequence involved in base pairing with the guide RNA. Also acts as a protein methyltransferase by mediating methylation of 'Gln-105' of histone H2A (H2AQ105me), a modification that impairs binding of the FACT complex and is specifically present at 35S ribosomal DNA locus. The sequence is that of rRNA 2'-O-methyltransferase fibrillarin (NOP1) from Encephalitozoon cuniculi (strain GB-M1) (Microsporidian parasite).